The primary structure comprises 478 residues: Aspartate ammonia-lyase (478 aa).

The L-aspartate site is built by threonine 109, serine 148, threonine 149, asparagine 150, and threonine 195. The interval 326 to 335 (GSSIMPGKVN) is SS loop. Serine 327 serves as the catalytic Proton acceptor. L-aspartate-binding residues include serine 328 and lysine 333.

This sequence belongs to the class-II fumarase/aspartase family. Aspartase subfamily. As to quaternary structure, homotetramer.

The enzyme catalyses L-aspartate = fumarate + NH4(+). Functionally, catalyzes the reversible conversion of L-aspartate to fumarate and ammonia. The polypeptide is Aspartate ammonia-lyase (Pseudomonas fluorescens).